A 139-amino-acid chain; its full sequence is Putative pre-16S rRNA nuclease (139 aa).

The protein belongs to the YqgF nuclease family.

The protein localises to the cytoplasm. Functionally, could be a nuclease involved in processing of the 5'-end of pre-16S rRNA. This chain is Putative pre-16S rRNA nuclease, found in Streptococcus equi subsp. zooepidemicus (strain H70).